Here is a 313-residue protein sequence, read N- to C-terminus: NAD-capped RNA hydrolase NudC (313 aa).

Arg-111 is a binding site for substrate. The Nudix hydrolase domain occupies 168-293 (PRIDPAVICL…DWSSASESKL (126 aa)). A divalent metal cation-binding residues include Ala-202, Glu-218, and Glu-222. The Nudix box motif lies at 203–224 (GFVEAGESFEVCVAREIREEIG). 236 to 243 (QQWPFPRS) lines the substrate pocket. Glu-264 provides a ligand contact to a divalent metal cation.

This sequence belongs to the Nudix hydrolase family. NudC subfamily. As to quaternary structure, homodimer. Mg(2+) is required as a cofactor. The cofactor is Mn(2+).

The catalysed reaction is a 5'-end NAD(+)-phospho-ribonucleoside in mRNA + H2O = a 5'-end phospho-adenosine-phospho-ribonucleoside in mRNA + beta-nicotinamide D-ribonucleotide + 2 H(+). The enzyme catalyses NAD(+) + H2O = beta-nicotinamide D-ribonucleotide + AMP + 2 H(+). It catalyses the reaction NADH + H2O = reduced beta-nicotinamide D-ribonucleotide + AMP + 2 H(+). In terms of biological role, mRNA decapping enzyme that specifically removes the nicotinamide adenine dinucleotide (NAD) cap from a subset of mRNAs by hydrolyzing the diphosphate linkage to produce nicotinamide mononucleotide (NMN) and 5' monophosphate mRNA. The NAD-cap is present at the 5'-end of some mRNAs and stabilizes RNA against 5'-processing. Has preference for mRNAs with a 5'-end purine. Catalyzes the hydrolysis of a broad range of dinucleotide pyrophosphates. The sequence is that of NAD-capped RNA hydrolase NudC from Mycobacterium tuberculosis (strain ATCC 25177 / H37Ra).